Consider the following 461-residue polypeptide: Ribitol-5-phosphate transferase FKTN (461 aa).

The Cytoplasmic portion of the chain corresponds to M1 to N7. A required and sufficient for interaction with POMGNT1 region spans residues K6–Y27. A helical; Signal-anchor for type II membrane protein membrane pass occupies residues V8–Y28. Residues K29 to Y461 are Lumenal-facing. Residue N92 is glycosylated (N-linked (GlcNAc...) asparagine).

This sequence belongs to the LicD transferase family. As to quaternary structure, forms a complex composed of FKTN/fukutin, FKRP and RXYLT1/TMEM5. Interacts (via transmembrane domain) with POMGNT1; the interaction is direct and is required for normal POMGNT1 location in Golgi membranes. In terms of tissue distribution, expressed in the retina (at protein level).

Its subcellular location is the golgi apparatus membrane. The protein localises to the cytoplasm. It is found in the nucleus. It catalyses the reaction 3-O-[beta-D-GalNAc-(1-&gt;3)-beta-D-GlcNAc-(1-&gt;4)-(O-6-P-alpha-D-Man)]-Thr-[protein] + CDP-L-ribitol = 3-O-[Rib-ol-P-3-beta-D-GalNAc-(1-&gt;3)-beta-D-GlcNAc-(1-&gt;4)-(O-6-P-alpha-D-Man)]-Thr-[protein] + CMP + H(+). The protein operates within protein modification; protein glycosylation. In terms of biological role, catalyzes the transfer of CDP-ribitol to the distal N-acetylgalactosamine of the phosphorylated O-mannosyl trisaccharide (N-acetylgalactosamine-beta-3-N-acetylglucosamine-beta-4-(phosphate-6-)mannose), a carbohydrate structure present in alpha-dystroglycan (DAG1). This constitutes the first step in the formation of the ribitol 5-phosphate tandem repeat which links the phosphorylated O-mannosyl trisaccharide to the ligand binding moiety composed of repeats of 3-xylosyl-alpha-1,3-glucuronic acid-beta-1. May interact with and reinforce a large complex encompassing the outside and inside of muscle membranes. Could be involved in brain development. This is Ribitol-5-phosphate transferase FKTN from Macaca fascicularis (Crab-eating macaque).